A 52-amino-acid chain; its full sequence is uncharacterized protein (52 aa).

This is an uncharacterized protein from Dictyostelium discoideum (Social amoeba).